A 125-amino-acid polypeptide reads, in one-letter code: Large ribosomal subunit protein bL12 (125 aa).

The protein belongs to the bacterial ribosomal protein bL12 family. Homodimer. Part of the ribosomal stalk of the 50S ribosomal subunit. Forms a multimeric L10(L12)X complex, where L10 forms an elongated spine to which 2 to 4 L12 dimers bind in a sequential fashion. Binds GTP-bound translation factors.

Forms part of the ribosomal stalk which helps the ribosome interact with GTP-bound translation factors. Is thus essential for accurate translation. This chain is Large ribosomal subunit protein bL12, found in Endomicrobium trichonymphae.